Reading from the N-terminus, the 630-residue chain is Golgi apyrase (630 aa).

Residues 1–500 (MLIENTNDRF…RKQSSSLSNK (500 aa)) are Lumenal-facing. E152 (proton acceptor) is an active-site residue. The helical transmembrane segment at 501–517 (GFLMWFAIICCIFYLIF) threads the bilayer. Topologically, residues 518-630 (HRSHIIRRRF…SKFKDSRLYD (113 aa)) are cytoplasmic. Residues 586 to 606 (SSATMQREHEPQRTASQSANL) form a disordered region.

Belongs to the GDA1/CD39 NTPase family. As to quaternary structure, interacts with activator subunit VMA13 of vacuolar H(+)-ATPase. Interacts with CDC55; this interaction is disrupted by adenovirus E4orf4, which remains associated with both YND1 and CDC55. Requires Ca(2+) as cofactor. It depends on Mg(2+) as a cofactor. The cofactor is Mn(2+).

It is found in the golgi apparatus. The protein localises to the membrane. The catalysed reaction is a ribonucleoside 5'-triphosphate + 2 H2O = a ribonucleoside 5'-phosphate + 2 phosphate + 2 H(+). It participates in protein modification; protein glycosylation. Activity is inhibited both by interaction with VMA13 and by V-ATPase acidification of the lumen. The activity of VMA13 is not required for YND1 inhibition. Its function is as follows. Catalyzes the hydrolysis of phosphoanhydride bonds of nucleoside tri- and di-phosphates. Has equal high activity toward ADP/ATP, GDP/GTP, and UDP/UTP and approximately 50% less toward CDP/CTP and thiamine pyrophosphate. Has no activity toward GMP. Required for Golgi glycosylation and cell wall integrity. Together with CDC55, required for adenovirus E4orf4 (early region 4 open reading frame 4) induced toxicity, the apyrase activity is not required for this function. Plays a role in sphingolipid synthesis. This Saccharomyces cerevisiae (strain ATCC 204508 / S288c) (Baker's yeast) protein is Golgi apyrase (YND1).